An 858-amino-acid chain; its full sequence is Respiratory burst oxidase homolog protein D (858 aa).

Basic and acidic residues predominate over residues 1–13 (MQNPEDHHSDREL). The tract at residues 1 to 27 (MQNPEDHHSDRELSSPSNTTKSNDDKN) is disordered. The Cytoplasmic portion of the chain corresponds to 1 to 318 (MQNPEDHHSD…KYFLLDNWRR (318 aa)). 2 EF-hand-like regions span residues 134 to 144 (TATSDSLLPRA) and 171 to 182 (RNITSGCISKEQ). EF-hand domains are found at residues 194–229 (SFDS…SASA) and 238–273 (QAAE…APIQ). Ca(2+)-binding residues include Asp207, Asp209, Asp211, Arg213, and Glu218. The chain crosses the membrane as a helical span at residues 319-339 (VWVLLLWIGVMAGLFAYKYVQ). Topologically, residues 340–351 (YKNKAAFNVMGH) are extracellular. The chain crosses the membrane as a helical span at residues 352–372 (CVCVAKGAAEVLKLNMALILL). The 158-residue stretch at 357-514 (KGAAEVLKLN…LFVIVYSLLI (158 aa)) folds into the Ferric oxidoreductase domain. The Cytoplasmic portion of the chain corresponds to 373 to 397 (PVCRNTITWLRNKTKLGGAVPFDDN). Residues 398–418 (INFHKVVAGAIAVGVGIHVLA) form a helical membrane-spanning segment. Residues 419–454 (HMTCDFPRLLNASPEKYKPMEPYFGDQPRNYWHFVK) are Extracellular-facing. The helical transmembrane segment at 455 to 475 (GVEGVSGIIMVVLMSIAFTLA) threads the bilayer. The Cytoplasmic portion of the chain corresponds to 476–497 (SQRFRRNKIRLPRPLNKLTGFN). The chain crosses the membrane as a helical span at residues 498-518 (AFWYSHHLFVIVYSLLIVHGI). The Extracellular portion of the chain corresponds to 519-675 (ELYLTKEWYK…APAQDYKEYE (157 aa)). Residues 548-670 (LRAFRSSVKD…DGPYGAPAQD (123 aa)) form the FAD-binding FR-type domain. Residues 676–696 (VLLLVGLGIGATPMISIVKDI) traverse the membrane as a helical segment. Topologically, residues 697–858 (VNNMKEEKYD…TKFDFHKENF (162 aa)) are cytoplasmic.

The protein belongs to the RBOH (TC 5.B.1.3) family. As to quaternary structure, monomer and homodimer. Phosphorylated by CPK. Expressed in leaves.

It localises to the membrane. In terms of biological role, calcium-dependent NADPH oxidase that generates superoxide. May be responsible for the oxidative burst in response to pathogen attack in the leaves. This is Respiratory burst oxidase homolog protein D (RBOHD) from Solanum tuberosum (Potato).